Consider the following 272-residue polypeptide: Tryptophan synthase alpha chain (272 aa).

Catalysis depends on proton acceptor residues Glu53 and Asp64.

This sequence belongs to the TrpA family. As to quaternary structure, tetramer of two alpha and two beta chains.

The enzyme catalyses (1S,2R)-1-C-(indol-3-yl)glycerol 3-phosphate + L-serine = D-glyceraldehyde 3-phosphate + L-tryptophan + H2O. Its pathway is amino-acid biosynthesis; L-tryptophan biosynthesis; L-tryptophan from chorismate: step 5/5. The alpha subunit is responsible for the aldol cleavage of indoleglycerol phosphate to indole and glyceraldehyde 3-phosphate. This Xanthomonas campestris pv. campestris (strain B100) protein is Tryptophan synthase alpha chain.